Here is a 426-residue protein sequence, read N- to C-terminus: 3-phosphoshikimate 1-carboxyvinyltransferase (426 aa).

3-phosphoshikimate is bound by residues lysine 22, serine 23, and arginine 27. Lysine 22 lines the phosphoenolpyruvate pocket. Glycine 96 and arginine 124 together coordinate phosphoenolpyruvate. 3-phosphoshikimate contacts are provided by serine 170, serine 171, glutamine 172, serine 198, aspartate 314, asparagine 337, and lysine 341. Glutamine 172 is a phosphoenolpyruvate binding site. The Proton acceptor role is filled by aspartate 314. 3 residues coordinate phosphoenolpyruvate: arginine 345, arginine 387, and lysine 412.

It belongs to the EPSP synthase family. Monomer.

The protein localises to the cytoplasm. It carries out the reaction 3-phosphoshikimate + phosphoenolpyruvate = 5-O-(1-carboxyvinyl)-3-phosphoshikimate + phosphate. It participates in metabolic intermediate biosynthesis; chorismate biosynthesis; chorismate from D-erythrose 4-phosphate and phosphoenolpyruvate: step 6/7. In terms of biological role, catalyzes the transfer of the enolpyruvyl moiety of phosphoenolpyruvate (PEP) to the 5-hydroxyl of shikimate-3-phosphate (S3P) to produce enolpyruvyl shikimate-3-phosphate and inorganic phosphate. The polypeptide is 3-phosphoshikimate 1-carboxyvinyltransferase (Vibrio campbellii (strain ATCC BAA-1116)).